Consider the following 904-residue polypeptide: Alanine--tRNA ligase (904 aa).

The Zn(2+) site is built by His600, His604, Cys704, and His708.

It belongs to the class-II aminoacyl-tRNA synthetase family. It depends on Zn(2+) as a cofactor.

It localises to the cytoplasm. It catalyses the reaction tRNA(Ala) + L-alanine + ATP = L-alanyl-tRNA(Ala) + AMP + diphosphate. Functionally, catalyzes the attachment of alanine to tRNA(Ala) in a two-step reaction: alanine is first activated by ATP to form Ala-AMP and then transferred to the acceptor end of tRNA(Ala). Also edits incorrectly charged Ser-tRNA(Ala) and Gly-tRNA(Ala) via its editing domain. This chain is Alanine--tRNA ligase, found in Metallosphaera sedula (strain ATCC 51363 / DSM 5348 / JCM 9185 / NBRC 15509 / TH2).